Consider the following 582-residue polypeptide: 2-succinyl-5-enolpyruvyl-6-hydroxy-3-cyclohexene-1-carboxylate synthase (582 aa).

It belongs to the TPP enzyme family. MenD subfamily. As to quaternary structure, homodimer. Mg(2+) serves as cofactor. It depends on Mn(2+) as a cofactor. Thiamine diphosphate is required as a cofactor.

The catalysed reaction is isochorismate + 2-oxoglutarate + H(+) = 5-enolpyruvoyl-6-hydroxy-2-succinyl-cyclohex-3-ene-1-carboxylate + CO2. Its pathway is quinol/quinone metabolism; 1,4-dihydroxy-2-naphthoate biosynthesis; 1,4-dihydroxy-2-naphthoate from chorismate: step 2/7. It functions in the pathway cofactor biosynthesis; phylloquinone biosynthesis. Catalyzes the thiamine diphosphate-dependent decarboxylation of 2-oxoglutarate and the subsequent addition of the resulting succinic semialdehyde-thiamine pyrophosphate anion to isochorismate to yield 2-succinyl-5-enolpyruvyl-6-hydroxy-3-cyclohexene-1-carboxylate (SEPHCHC). In Trichodesmium erythraeum (strain IMS101), this protein is 2-succinyl-5-enolpyruvyl-6-hydroxy-3-cyclohexene-1-carboxylate synthase.